The primary structure comprises 243 residues: Transcription factor TFIIS homolog (243 aa).

Residues 77–201 (MRDIIQMMFF…SQQKVAEKTS (125 aa)) form the TFIIS central domain. The TFIIS-type zinc finger occupies 202–242 (QLYKCPNCKQRMCTYREVQTRALDEPSTIFCTCKKCGHEFI). Positions 206, 209, 234, and 237 each coordinate Zn(2+).

It belongs to the TFS-II family.

In terms of biological role, putative initiation factor. Necessary for efficient transcription elongation past template-encoded arresting sites. The chain is Transcription factor TFIIS homolog from Ornithodoros (relapsing fever ticks).